Consider the following 100-residue polypeptide: Urease subunit gamma (100 aa).

Belongs to the urease gamma subunit family. As to quaternary structure, heterotrimer of UreA (gamma), UreB (beta) and UreC (alpha) subunits. Three heterotrimers associate to form the active enzyme.

It is found in the cytoplasm. It carries out the reaction urea + 2 H2O + H(+) = hydrogencarbonate + 2 NH4(+). The protein operates within nitrogen metabolism; urea degradation; CO(2) and NH(3) from urea (urease route): step 1/1. In Frankia alni (strain DSM 45986 / CECT 9034 / ACN14a), this protein is Urease subunit gamma.